The sequence spans 44 residues: Non-structural protein 7b (44 aa).

Residues 9-29 (FYLCFLAFLLFLVLIMLLIFW) form a helical membrane-spanning segment.

It localises to the host membrane. The chain is Non-structural protein 7b from Bat coronavirus HKU3 (BtCoV).